Reading from the N-terminus, the 113-residue chain is Prefoldin subunit beta (113 aa).

The protein belongs to the prefoldin subunit beta family. In terms of assembly, heterohexamer of two alpha and four beta subunits.

It localises to the cytoplasm. Functionally, molecular chaperone capable of stabilizing a range of proteins. Seems to fulfill an ATP-independent, HSP70-like function in archaeal de novo protein folding. This Methanococcus maripaludis (strain DSM 14266 / JCM 13030 / NBRC 101832 / S2 / LL) protein is Prefoldin subunit beta.